Consider the following 126-residue polypeptide: MKEIIFTEKAPKPIGPYSQGVKVGDILYVSGQIPVDPKTNEVVGKNIEEQTIRVIENIKAVLEAAGYMLDDVVMSFVYLKDIKDFQRFNEVYSKYFSNKPPARVTVEVSRLPRDVLIEITVIAQKS.

It belongs to the RutC family.

In Saccharolobus solfataricus (strain ATCC 35092 / DSM 1617 / JCM 11322 / P2) (Sulfolobus solfataricus), this protein is RutC family protein SSO3206.